Reading from the N-terminus, the 445-residue chain is GTPase Der (445 aa).

EngA-type G domains are found at residues 3-167 and 180-353; these read PVIA…YAGE and IKIA…AAAM. Residues 9–16, 56–60, 119–122, 186–193, 233–237, and 298–301 each bind GTP; these read GRPNVGKS, DTGGF, NKAE, DTAGL, and NKWD. One can recognise a KH-like domain in the interval 354–438; it reads KKLPTPKLTR…PLRIEFRSST (85 aa).

This sequence belongs to the TRAFAC class TrmE-Era-EngA-EngB-Septin-like GTPase superfamily. EngA (Der) GTPase family. As to quaternary structure, associates with the 50S ribosomal subunit.

In terms of biological role, GTPase that plays an essential role in the late steps of ribosome biogenesis. This is GTPase Der from Burkholderia pseudomallei (strain 1106a).